The following is a 288-amino-acid chain: Acetyl-coenzyme A carboxylase carboxyl transferase subunit beta (288 aa).

In terms of domain architecture, CoA carboxyltransferase N-terminal spans L34 to Q288. The Zn(2+) site is built by C38, C41, C56, and C59. The segment at C38–C59 adopts a C4-type zinc-finger fold.

Belongs to the AccD/PCCB family. In terms of assembly, acetyl-CoA carboxylase is a heterohexamer composed of biotin carboxyl carrier protein (AccB), biotin carboxylase (AccC) and two subunits each of ACCase subunit alpha (AccA) and ACCase subunit beta (AccD). Zn(2+) is required as a cofactor.

Its subcellular location is the cytoplasm. It carries out the reaction N(6)-carboxybiotinyl-L-lysyl-[protein] + acetyl-CoA = N(6)-biotinyl-L-lysyl-[protein] + malonyl-CoA. Its pathway is lipid metabolism; malonyl-CoA biosynthesis; malonyl-CoA from acetyl-CoA: step 1/1. Functionally, component of the acetyl coenzyme A carboxylase (ACC) complex. Biotin carboxylase (BC) catalyzes the carboxylation of biotin on its carrier protein (BCCP) and then the CO(2) group is transferred by the transcarboxylase to acetyl-CoA to form malonyl-CoA. The chain is Acetyl-coenzyme A carboxylase carboxyl transferase subunit beta from Streptococcus pyogenes serotype M49 (strain NZ131).